The chain runs to 105 residues: Large ribosomal subunit protein eL36 (105 aa).

This sequence belongs to the eukaryotic ribosomal protein eL36 family. Component of the large ribosomal subunit.

It is found in the cytoplasm. The protein localises to the cytosol. Functionally, component of the large ribosomal subunit. The ribosome is a large ribonucleoprotein complex responsible for the synthesis of proteins in the cell. The protein is Large ribosomal subunit protein eL36 (RPL36) of Gallus gallus (Chicken).